A 409-amino-acid polypeptide reads, in one-letter code: MSQAPNRLKPFFENLEFEQNDGKMILNFGPQHPSAHGQLKLVLELDGEKVVRAMPEVGFMHRGVEKMAENMTYQEFIPVTDRVDYIASSANNYAFCAAVEKLCAIEVPRRAQIIRVMLLELNRISSHLLFLATHALDVGAMSVFLYAFREREYVLDLIEKYCGARLTHSSIRIGGVPLDLPDGWCEELLKFCEKFPSDITLYEDLLSANRIWQARLIDVGVVSKELALSSGCSGVMLRASGIARDIRKEEPYLIYDELEFDVPYATKGDCYARYLLYMKEMRECVKILKQCVSKYQTSSPAIIADAPEYVSASKEQIMSQNYSLMQHFVLITQGLKPPKGEIYFASESPKGELGIYINSDGSASPYRLKIRTPSFWHCAIYEDMLVGQYVADVAAIIGSTNIILGEVDR.

The protein belongs to the complex I 49 kDa subunit family. NDH-1 is composed of 14 different subunits. Subunits NuoB, C, D, E, F, and G constitute the peripheral sector of the complex.

The protein localises to the cell inner membrane. It catalyses the reaction a quinone + NADH + 5 H(+)(in) = a quinol + NAD(+) + 4 H(+)(out). In terms of biological role, NDH-1 shuttles electrons from NADH, via FMN and iron-sulfur (Fe-S) centers, to quinones in the respiratory chain. The immediate electron acceptor for the enzyme in this species is believed to be ubiquinone. Couples the redox reaction to proton translocation (for every two electrons transferred, four hydrogen ions are translocated across the cytoplasmic membrane), and thus conserves the redox energy in a proton gradient. This is NADH-quinone oxidoreductase subunit D from Campylobacter concisus (strain 13826).